A 254-amino-acid chain; its full sequence is PF03932 family protein CutC (254 aa).

This sequence belongs to the CutC family.

Its subcellular location is the cytoplasm. This is PF03932 family protein CutC from Yersinia pestis bv. Antiqua (strain Antiqua).